The chain runs to 121 residues: Type II secretion system protein I (121 aa).

The propeptide at 1-6 (MRRQKG) is leader sequence. Position 7 is an N-methylmethionine (methionine 7). The helical transmembrane segment at 7–27 (MTLVEVLVALSVFALAGIAVL) threads the bilayer.

The protein belongs to the GSP I family. Type II secretion is composed of four main components: the outer membrane complex, the inner membrane complex, the cytoplasmic secretion ATPase and the periplasm-spanning pseudopilus. Interacts with core component OutG. Cleaved by prepilin peptidase. Post-translationally, methylated by prepilin peptidase at the amino group of the N-terminal methionine once the leader sequence is cleaved by prepilin peptidase.

It localises to the cell inner membrane. Component of the type II secretion system required for the energy-dependent secretion of extracellular factors such as proteases and toxins from the periplasm. Part of the pseudopilus tip complex that is critical for the recognition and binding of secretion substrates. This Pectobacterium carotovorum subsp. carotovorum (Erwinia carotovora subsp. carotovora) protein is Type II secretion system protein I (outI).